Consider the following 858-residue polypeptide: Lysine-specific demethylase JMJ706 (858 aa).

The JmjN domain occupies 103–144; that stretch reads CPVYYPTKEEFEDPIGYIQKIAPVASKYGICKIVSPVSASVP. One can recognise a JmjC domain in the interval 250-420; it reads KSNWNLKNFS…LGSVASRRYA (171 aa). The Fe cation site is built by His293, Glu295, and His388. Positions 737–746 are enriched in basic and acidic residues; the sequence is QHNKRPEDYG. Disordered regions lie at residues 737–791 and 829–858; these read QHNK…SAKQ and SSST…WPAI. Residues 829-844 are compositionally biased toward polar residues; the sequence is SSSTNRVVEQGSSGQR.

Fe(2+) serves as cofactor.

The protein localises to the nucleus. The catalysed reaction is N(6),N(6),N(6)-trimethyl-L-lysyl(9)-[histone H3] + 2 2-oxoglutarate + 2 O2 = N(6)-methyl-L-lysyl(9)-[histone H3] + 2 formaldehyde + 2 succinate + 2 CO2. Histone demethylase that demethylates 'Lys-9' (H3K9me) of histone H3 with a specific activity for H3K9me3 and H3K9me2. No activity on H3K4me3, H3K9me1, H3K27me2 and H3K36me3/2. Involved in the control of floral organ development by demethylating H3K9me3 and H3K9me2 in the promoter regions of DH1 and MADS47. The 'Lys-9' demethylation of these two genes is required for induction of their expression. The sequence is that of Lysine-specific demethylase JMJ706 (JMJ706) from Oryza sativa subsp. japonica (Rice).